A 464-amino-acid polypeptide reads, in one-letter code: Soluble pyridine nucleotide transhydrogenase (464 aa).

35-44 serves as a coordination point for FAD; the sequence is DDRRQVGGNC.

The protein belongs to the class-I pyridine nucleotide-disulfide oxidoreductase family. The cofactor is FAD.

Its subcellular location is the cytoplasm. The catalysed reaction is NAD(+) + NADPH = NADH + NADP(+). Conversion of NADPH, generated by peripheral catabolic pathways, to NADH, which can enter the respiratory chain for energy generation. The chain is Soluble pyridine nucleotide transhydrogenase from Pseudomonas putida (strain ATCC 47054 / DSM 6125 / CFBP 8728 / NCIMB 11950 / KT2440).